Here is a 211-residue protein sequence, read N- to C-terminus: tRNA (guanine-N(7)-)-methyltransferase (211 aa).

S-adenosyl-L-methionine is bound by residues glutamate 44, aspartate 69, aspartate 96, and aspartate 118. The active site involves aspartate 118. Lysine 122 is a substrate binding site. The tract at residues 124–129 (KHEKRR) is interaction with RNA. Substrate contacts are provided by residues aspartate 154 and 191 to 194 (TEYE).

It belongs to the class I-like SAM-binding methyltransferase superfamily. TrmB family.

It carries out the reaction guanosine(46) in tRNA + S-adenosyl-L-methionine = N(7)-methylguanosine(46) in tRNA + S-adenosyl-L-homocysteine. It participates in tRNA modification; N(7)-methylguanine-tRNA biosynthesis. Functionally, catalyzes the formation of N(7)-methylguanine at position 46 (m7G46) in tRNA. This is tRNA (guanine-N(7)-)-methyltransferase from Streptococcus pyogenes serotype M12 (strain MGAS2096).